The following is a 952-amino-acid chain: Leucine--tRNA ligase (952 aa).

Positions 65-76 match the 'HIGH' region motif; that stretch reads PYPSGAGLHVGH. A 'KMSKS' region motif is present at residues 727 to 731; the sequence is KMGKS. Position 730 (K730) interacts with ATP.

It belongs to the class-I aminoacyl-tRNA synthetase family.

The protein resides in the cytoplasm. It carries out the reaction tRNA(Leu) + L-leucine + ATP = L-leucyl-tRNA(Leu) + AMP + diphosphate. This chain is Leucine--tRNA ligase, found in Salinispora arenicola (strain CNS-205).